A 376-amino-acid polypeptide reads, in one-letter code: tRNA-specific 2-thiouridylase MnmA (376 aa).

Residues 19–26 and methionine 45 contribute to the ATP site; that span reads GMSGGVDS. An interaction with target base in tRNA region spans residues 105-107; the sequence is NPD. The active-site Nucleophile is cysteine 110. A disulfide bridge links cysteine 110 with cysteine 210. Glycine 134 serves as a coordination point for ATP. The interval 160 to 162 is interaction with tRNA; sequence KDQ. Cysteine 210 acts as the Cysteine persulfide intermediate in catalysis. The segment at 326 to 327 is interaction with tRNA; that stretch reads RY.

It belongs to the MnmA/TRMU family.

The protein localises to the cytoplasm. The catalysed reaction is S-sulfanyl-L-cysteinyl-[protein] + uridine(34) in tRNA + AH2 + ATP = 2-thiouridine(34) in tRNA + L-cysteinyl-[protein] + A + AMP + diphosphate + H(+). Its function is as follows. Catalyzes the 2-thiolation of uridine at the wobble position (U34) of tRNA, leading to the formation of s(2)U34. This chain is tRNA-specific 2-thiouridylase MnmA, found in Bordetella petrii (strain ATCC BAA-461 / DSM 12804 / CCUG 43448).